Here is a 69-residue protein sequence, read N- to C-terminus: uncharacterized protein (69 aa).

The signal sequence occupies residues 1-19; sequence MKRIWVSLMIAITACSAHA.

This is an uncharacterized protein from Pasteurella multocida (strain Pm70).